The following is a 414-amino-acid chain: Esterase FrsA (414 aa).

The protein belongs to the FrsA family.

The enzyme catalyses a carboxylic ester + H2O = an alcohol + a carboxylate + H(+). Functionally, catalyzes the hydrolysis of esters. The polypeptide is Esterase FrsA (Shigella boydii serotype 4 (strain Sb227)).